Reading from the N-terminus, the 919-residue chain is UPF0182 protein SUN_1015 (919 aa).

Transmembrane regions (helical) follow at residues 8-28 (IIIT…VDYY), 51-71 (ILSF…HIHF), 102-122 (AVAW…GSYA), 158-178 (VYQF…IGVL), 207-227 (LTAF…YNIL), 246-266 (IPAY…LFFY), and 274-294 (VIVS…WIYP).

The protein belongs to the UPF0182 family.

It localises to the cell membrane. The protein is UPF0182 protein SUN_1015 of Sulfurovum sp. (strain NBC37-1).